We begin with the raw amino-acid sequence, 295 residues long: uncharacterized protein (295 aa).

The N-terminal stretch at 1-19 (MHKLLLIITVFSTFNVAQA) is a signal peptide.

This is an uncharacterized protein from Rickettsia typhi (strain ATCC VR-144 / Wilmington).